The primary structure comprises 621 residues: Very-long-chain aldehyde decarbonylase GL1-5 (621 aa).

The next 5 membrane-spanning stretches (helical) occupy residues 99–119, 126–146, 186–206, 224–244, and 332–352; these read IILS…GQHL, GAGL…YWFH, LLFS…IIAF, FELV…LMYT, and MWPL…SFTV. A Fatty acid hydroxylase domain is found at 138 to 272; it reads VEFLYYWFHR…MPFYDYIYNT (135 aa).

It belongs to the sterol desaturase family. In terms of assembly, homodimer. As to expression, expressed in panicles, developing spikelets, stamens and hulls and, at low levels, in roots, developing seeds, flag leaves and seedling shoots. Strongly expressed in the epidermal cells of anthers.

It localises to the endoplasmic reticulum membrane. It carries out the reaction a long-chain fatty aldehyde + 2 NADPH + O2 + H(+) = a long-chain alkane + formate + 2 NADP(+) + H2O. Its function is as follows. Aldehyde decarbonylase involved in the conversion of aldehydes to alkanes. Core component of a very-long-chain alkane synthesis complex. Required for the biosynthesis of very-long-chain fatty acids (including polyesters) in cuticles, anther tapetum and pollen exine. In Oryza sativa subsp. japonica (Rice), this protein is Very-long-chain aldehyde decarbonylase GL1-5.